A 420-amino-acid polypeptide reads, in one-letter code: Subtilisin-like protease 7 (420 aa).

The signal sequence occupies residues 1-20 (MGFITKAIPLALAAASVING). Residues 21–119 (AEIMETRAGV…IERDARVQIN (99 aa)) constitute a propeptide that is removed on maturation. The region spanning 36 to 118 (KYIVVMNDGM…YIERDARVQI (83 aa)) is the Inhibitor I9 domain. The Peptidase S8 domain occupies 129–413 (SWGLARVGSK…SFPLNIYEEQ (285 aa)). Residues D161 and H192 each act as charge relay system in the active site. 2 N-linked (GlcNAc...) asparagine glycosylation sites follow: N222 and N252. S346 functions as the Charge relay system in the catalytic mechanism. N-linked (GlcNAc...) asparagine glycosylation occurs at N396.

This sequence belongs to the peptidase S8 family.

It localises to the secreted. Functionally, secreted subtilisin-like serine protease with keratinolytic activity that contributes to pathogenicity. This Arthroderma benhamiae (strain ATCC MYA-4681 / CBS 112371) (Trichophyton mentagrophytes) protein is Subtilisin-like protease 7 (SUB7).